Here is a 214-residue protein sequence, read N- to C-terminus: A-type ATP synthase subunit D (214 aa).

Belongs to the V-ATPase D subunit family. Has multiple subunits with at least A(3), B(3), C, D, E, F, H, I and proteolipid K(x).

It is found in the cell membrane. Component of the A-type ATP synthase that produces ATP from ADP in the presence of a proton gradient across the membrane. The chain is A-type ATP synthase subunit D from Thermococcus gammatolerans (strain DSM 15229 / JCM 11827 / EJ3).